The chain runs to 228 residues: uncharacterized protein (228 aa).

Its subcellular location is the mitochondrion. This is an uncharacterized protein from Emericella nidulans (Aspergillus nidulans).